A 1769-amino-acid chain; its full sequence is Tight junction protein 1 (1769 aa).

The region spanning 23-110 (TVTLHRAPGF…NAKITIRRKK (88 aa)) is the PDZ 1 domain. Basic residues predominate over residues 102–112 (AKITIRRKKKV). Residues 102–188 (AKITIRRKKK…QPPKPTKVTL (87 aa)) are disordered. Residues 123-135 (PVSENEDSYDEEV) show a composition bias toward acidic residues. Phosphoserine is present on serine 125. Phosphotyrosine is present on tyrosine 131. The segment covering 148–174 (RRSEKSWARDRSASRERSLSPRSDRRS) has biased composition (basic and acidic residues). Phosphoserine occurs at positions 174, 177, and 178. Threonine 184 bears the Phosphothreonine mark. Residues 185–263 (KVTLVKSRKN…KLKMVVQRDE (79 aa)) form the PDZ 2 domain. Phosphoserine is present on residues serine 211 and serine 240. Threonine 266 bears the Phosphothreonine mark. Phosphoserine is present on residues serine 274, serine 276, serine 279, serine 283, serine 289, serine 293, serine 296, serine 299, serine 322, serine 328, serine 333, serine 336, and serine 352. The segment at 295–362 (ASDHSGRSHD…TPVKHADDHT (68 aa)) is disordered. The segment covering 298–326 (HSGRSHDRPPRHSRSRSPDQRSEPSDHSR) has biased composition (basic and acidic residues). At threonine 353 the chain carries Phosphothreonine. In terms of domain architecture, PDZ 3 spans 420–501 (SMKLVKFRKG…GEEVTILAQK (82 aa)). The 69-residue stretch at 515–583 (GDSFYIRTHF…PNKNRAEQLA (69 aa)) folds into the SH3 domain. Residues 609 to 790 (SKRNLRKSRE…WYGALKEAIQ (182 aa)) form the Guanylate kinase-like domain. A phosphoserine mark is found at serine 616 and serine 621. The occludin (OCLN)-binding region stretch occupies residues 632 to 875 (YERVVLREAG…GTPPESAITR (244 aa)). Threonine 808 is modified (phosphothreonine). Serine 809 and serine 820 each carry phosphoserine. Residue tyrosine 821 is modified to Phosphotyrosine. Phosphoserine is present on residues serine 823, serine 827, and serine 836. 2 disordered regions span residues 824–976 (APGS…LRTP) and 1010–1067 (EMMR…SYTD). Residues threonine 845, threonine 847, threonine 853, threonine 860, and threonine 867 each carry the phosphothreonine modification. Basic and acidic residues predominate over residues 878 to 891 (EPVREDSSGMHHEN). Positions 892–905 (QTYPPYSPQAQPQP) are enriched in low complexity. Serine 911 bears the Phosphoserine mark. Composition is skewed to polar residues over residues 933–952 (PETN…TLTN) and 962–976 (PSTS…LRTP). The residue at position 967 (serine 967) is a Phosphoserine. Serine 1070 bears the Phosphoserine mark. Disordered regions lie at residues 1091–1212 (SYYD…KAGH), 1224–1261 (PLIP…MKPQ), and 1273–1589 (KRSA…EFDS). Over residues 1108–1124 (QHPRDLDSRQHPEESSE) the composition is skewed to basic and acidic residues. At serine 1138 the chain carries Phosphoserine. A phosphotyrosine mark is found at tyrosine 1139 and tyrosine 1164. The interval 1150–1370 (RTSTLRHEEQ…FDRRSFENKP (221 aa)) is actin-binding region (ABR). The span at 1273–1286 (KRSASLENKKDENH) shows a compositional bias: basic and acidic residues. Over residues 1300–1310 (PGAPIIGPKPT) the composition is skewed to pro residues. Residues 1335–1346 (PPEDIVRSNHYD) show a composition bias toward basic and acidic residues. Tyrosine 1353 bears the Phosphotyrosine mark. Residue serine 1365 is modified to Phosphoserine. Residues 1387 to 1401 (HSQNQTNFSSYSSKG) show a composition bias toward polar residues. Over residues 1402–1419 (KSPEADAPDRSFGEKRYE) the composition is skewed to basic and acidic residues. Serine 1412 is subject to Phosphoserine. Composition is skewed to polar residues over residues 1460–1471 (NSISLDFQNSLV) and 1514–1523 (AEQTQKTVTP). The segment covering 1539-1548 (PFERKFESPK) has biased composition (basic and acidic residues). 2 positions are modified to phosphoserine: serine 1546 and serine 1618. One can recognise a ZU5 domain in the interval 1635 to 1769 (ATARGVFNNN…NCVSVLIDHF (135 aa)).

This sequence belongs to the MAGUK family. As to quaternary structure, homodimer. Forms heterodimers TJP3. Forms a heterodimer (via PDZ2 domain) with TJP2/ZO2 (via PDZ2 domain). Interacts with OCLN. Interacts with CALM, claudins, CGN/cingulin, CXADR, GJA12, GJD3 and UBN1. Interacts (via ZU5 domain) with CDC42BPB and MYZAP. Interacts (via PDZ domain) with GJA1. Interacts (via PDZ domains) with ANKRD2. Interacts with POPDC1 (via the C-terminus cytoplasmic tail). Interacts with HSPA4. Interacts with KIRREL1. Interacts with DLL1. Interacts with USP53 (via the C-terminal region). Interacts with DNMBP (via C-terminal domain); required for the apical cell-cell junction localization of DNMBP. Interacts with SPEF1. Interacts (via N-terminus) with CTNNA1. Interacts with CLDN18. Interacts with CLDN16 (via TRV motif); this is a prerequisite for anchoring of CLDN16 at the tight junction. Interacts with PKP1; the interaction facilitates TJP1/ZO-1 localization to the plasma membrane. Interacts with PATJ (via PDZ1-6 domains); the interaction is required for attachment and extension of TJP1/ZO1 condensates along the apical cell interface. In terms of processing, phosphorylated at tyrosine redidues in response to epidermal growth factor (EGF). This response is dependent on an intact actin microfilament system. Dephosphorylated by PTPRJ.

It is found in the cell membrane. Its subcellular location is the cell junction. The protein localises to the tight junction. It localises to the gap junction. TJP1, TJP2, and TJP3 are closely related scaffolding proteins that link tight junction (TJ) transmembrane proteins such as claudins, junctional adhesion molecules, and occludin to the actin cytoskeleton. Forms a multistranded TJP1/ZO1 condensate which elongates to form a tight junction belt, the belt is anchored at the apical cell membrane via interaction with PATJ. The tight junction acts to limit movement of substances through the paracellular space and as a boundary between the compositionally distinct apical and basolateral plasma membrane domains of epithelial and endothelial cells. Necessary for lumenogenesis, and particularly efficient epithelial polarization and barrier formation. Plays a role in the regulation of cell migration by targeting CDC42BPBb to the leading edge of migrating cells. With TJP2 and TJP3, participates in the junctional retention and stability of the transcription factor DBPA, but is not involved in its shuttling to the nucleus. May play a role in mediating cell morphology changes during ameloblast differentiation via its role in tight junctions. The sequence is that of Tight junction protein 1 from Canis lupus familiaris (Dog).